A 249-amino-acid chain; its full sequence is MKILVCENYDKLSEKAAQIIMSQITLKSNSILGLATGSTPIGMYKKLVEMYENKMIDFSDVKTFNLDEYQNLPISNDQSYHYFMDDNLFNYINVKRENIHIPNGMANDIENECIEYDNLIKEAGGIDIQVLGIGNNAHIGFNEPTVSFEKKTYVVELEESTKIANARFFNSLDEVPSKAITMGIGSIFESKKIMLLATGENKAKAIYDTIYGKVTPEVPASILQFHDDVIVILDKKAASLLNPKDYKVV.

Aspartate 67 acts as the Proton acceptor; for enolization step in catalysis. Asparagine 136 acts as the For ring-opening step in catalysis. The active-site Proton acceptor; for ring-opening step is the histidine 138. The For ring-opening step role is filled by glutamate 143.

Belongs to the glucosamine/galactosamine-6-phosphate isomerase family. NagB subfamily.

The catalysed reaction is alpha-D-glucosamine 6-phosphate + H2O = beta-D-fructose 6-phosphate + NH4(+). It participates in amino-sugar metabolism; N-acetylneuraminate degradation; D-fructose 6-phosphate from N-acetylneuraminate: step 5/5. Catalyzes the reversible isomerization-deamination of glucosamine 6-phosphate (GlcN6P) to form fructose 6-phosphate (Fru6P) and ammonium ion. This Clostridium botulinum (strain Alaska E43 / Type E3) protein is Glucosamine-6-phosphate deaminase.